A 227-amino-acid polypeptide reads, in one-letter code: Putative N-acetylmannosamine-6-phosphate 2-epimerase (227 aa).

It belongs to the NanE family.

It catalyses the reaction an N-acyl-D-glucosamine 6-phosphate = an N-acyl-D-mannosamine 6-phosphate. It participates in amino-sugar metabolism; N-acetylneuraminate degradation; D-fructose 6-phosphate from N-acetylneuraminate: step 3/5. Its function is as follows. Converts N-acetylmannosamine-6-phosphate (ManNAc-6-P) to N-acetylglucosamine-6-phosphate (GlcNAc-6-P). The protein is Putative N-acetylmannosamine-6-phosphate 2-epimerase of Shouchella clausii (strain KSM-K16) (Alkalihalobacillus clausii).